The primary structure comprises 321 residues: Protein-L-isoaspartate O-methyltransferase (321 aa).

The segment covering 21–31 (KPAERQREKRI) has biased composition (basic and acidic residues). The interval 21–65 (KPAERQREKRISSGVNAVSLPTPARTASAERASSTPAPGPGPQRV) is disordered. The span at 41–56 (PTPARTASAERASSTP) shows a compositional bias: low complexity. Ser-153 is an active-site residue.

The protein belongs to the methyltransferase superfamily. L-isoaspartyl/D-aspartyl protein methyltransferase family.

The protein localises to the cytoplasm. It catalyses the reaction [protein]-L-isoaspartate + S-adenosyl-L-methionine = [protein]-L-isoaspartate alpha-methyl ester + S-adenosyl-L-homocysteine. Functionally, catalyzes the methyl esterification of L-isoaspartyl residues in peptides and proteins that result from spontaneous decomposition of normal L-aspartyl and L-asparaginyl residues. It plays a role in the repair and/or degradation of damaged proteins. This chain is Protein-L-isoaspartate O-methyltransferase, found in Ralstonia nicotianae (strain ATCC BAA-1114 / GMI1000) (Ralstonia solanacearum).